Consider the following 275-residue polypeptide: Diaminopimelate epimerase (275 aa).

Substrate is bound by residues asparagine 12, glutamine 45, and asparagine 65. The active-site Proton donor is cysteine 74. Substrate contacts are provided by residues 75 to 76 (GN), asparagine 158, asparagine 191, and 209 to 210 (ER). The active-site Proton acceptor is cysteine 218. Residue 219-220 (GT) participates in substrate binding.

This sequence belongs to the diaminopimelate epimerase family. As to quaternary structure, homodimer.

The protein localises to the cytoplasm. It catalyses the reaction (2S,6S)-2,6-diaminopimelate = meso-2,6-diaminopimelate. It participates in amino-acid biosynthesis; L-lysine biosynthesis via DAP pathway; DL-2,6-diaminopimelate from LL-2,6-diaminopimelate: step 1/1. Its function is as follows. Catalyzes the stereoinversion of LL-2,6-diaminopimelate (L,L-DAP) to meso-diaminopimelate (meso-DAP), a precursor of L-lysine and an essential component of the bacterial peptidoglycan. The polypeptide is Diaminopimelate epimerase (Shewanella denitrificans (strain OS217 / ATCC BAA-1090 / DSM 15013)).